A 331-amino-acid chain; its full sequence is Ketol-acid reductoisomerase (NADP(+)) (331 aa).

Residues 2 to 182 (ARMYYDQDAN…GGTRAGILET (181 aa)) form the KARI N-terminal Rossmann domain. Residues 25–28 (YGSQ), S51, S53, and 83–86 (DEVQ) contribute to the NADP(+) site. The active site involves H108. Residue G134 participates in NADP(+) binding. A KARI C-terminal knotted domain is found at 183-328 (TFREETETDL…KDLRAMFSWL (146 aa)). Residues D191, E195, E227, and E231 each coordinate Mg(2+). S252 contacts substrate.

It belongs to the ketol-acid reductoisomerase family. As to quaternary structure, homooctamer. Mg(2+) serves as cofactor.

It catalyses the reaction (2R)-2,3-dihydroxy-3-methylbutanoate + NADP(+) = (2S)-2-acetolactate + NADPH + H(+). The enzyme catalyses (2R,3R)-2,3-dihydroxy-3-methylpentanoate + NADP(+) = (S)-2-ethyl-2-hydroxy-3-oxobutanoate + NADPH + H(+). It functions in the pathway amino-acid biosynthesis; L-isoleucine biosynthesis; L-isoleucine from 2-oxobutanoate: step 2/4. Its pathway is amino-acid biosynthesis; L-valine biosynthesis; L-valine from pyruvate: step 2/4. Involved in the biosynthesis of branched-chain amino acids (BCAA). Catalyzes an alkyl-migration followed by a ketol-acid reduction of (S)-2-acetolactate (S2AL) to yield (R)-2,3-dihydroxy-isovalerate. In the isomerase reaction, S2AL is rearranged via a Mg-dependent methyl migration to produce 3-hydroxy-3-methyl-2-ketobutyrate (HMKB). In the reductase reaction, this 2-ketoacid undergoes a metal-dependent reduction by NADPH to yield (R)-2,3-dihydroxy-isovalerate. The polypeptide is Ketol-acid reductoisomerase (NADP(+)) (Synechocystis sp. (strain ATCC 27184 / PCC 6803 / Kazusa)).